Reading from the N-terminus, the 65-residue chain is Metallothionein-like protein 3B (65 aa).

The protein belongs to the metallothionein superfamily. Type 15 family.

In terms of biological role, metallothioneins have a high content of cysteine residues that bind various heavy metals. This is Metallothionein-like protein 3B (MT3B) from Oryza sativa subsp. indica (Rice).